The sequence spans 388 residues: Ferrochelatase (388 aa).

His197 and Glu278 together coordinate Fe cation.

It belongs to the ferrochelatase family.

The protein resides in the cytoplasm. It carries out the reaction heme b + 2 H(+) = protoporphyrin IX + Fe(2+). It participates in porphyrin-containing compound metabolism; protoheme biosynthesis; protoheme from protoporphyrin-IX: step 1/1. Functionally, catalyzes the ferrous insertion into protoporphyrin IX. This chain is Ferrochelatase, found in Thermosynechococcus vestitus (strain NIES-2133 / IAM M-273 / BP-1).